A 159-amino-acid polypeptide reads, in one-letter code: U1 small nuclear ribonucleoprotein C (159 aa).

A Matrin-type zinc finger spans residues 4-36 (FYCDYCDTYLTHDSPSVRKTHCSGRKHKENVKD). Disordered stretches follow at residues 63–95 (PPTPFAAPPAGSAMIPPPPSLGGPPRPGMMPAP) and 139–159 (MRPPTRPMMLQSRPGMARPDR). Positions 77-95 (IPPPPSLGGPPRPGMMPAP) are enriched in pro residues.

It belongs to the U1 small nuclear ribonucleoprotein C family. Component of the U1 snRNP. The U1 snRNP is composed of the U1 snRNA and the 7 core Sm proteins snrpb, snrpd1, snrpd2, snrpd3, snrpe, snrpf and snrpg that assemble in a heptameric protein ring on the Sm site of the small nuclear RNA to form the core snRNP, and at least 3 U1 snRNP-specific proteins snrnp70/U1-70K, snrpa/U1-A and snrpc/U1-C. snrpc/U1-C interacts with U1 snRNA and the 5' splice-site region of the pre-mRNA.

It localises to the nucleus. Its function is as follows. Component of the spliceosomal U1 snRNP, which is essential for recognition of the pre-mRNA 5' splice-site and the subsequent assembly of the spliceosome. SNRPC/U1-C is directly involved in initial 5' splice-site recognition for both constitutive and regulated alternative splicing. The interaction with the 5' splice-site seems to precede base-pairing between the pre-mRNA and the U1 snRNA. Stimulates commitment or early (E) complex formation by stabilizing the base pairing of the 5' end of the U1 snRNA and the 5' splice-site region. This Xenopus laevis (African clawed frog) protein is U1 small nuclear ribonucleoprotein C.